A 282-amino-acid polypeptide reads, in one-letter code: Pantothenate synthetase (282 aa).

30–37 (MGYLHEGH) provides a ligand contact to ATP. Catalysis depends on His-37, which acts as the Proton donor. Gln-61 contacts (R)-pantoate. Residue Gln-61 participates in beta-alanine binding. 147–150 (GMKD) provides a ligand contact to ATP. A (R)-pantoate-binding site is contributed by Gln-153. ATP-binding positions include Val-176 and 184–187 (KSSR).

Belongs to the pantothenate synthetase family. In terms of assembly, homodimer.

Its subcellular location is the cytoplasm. The enzyme catalyses (R)-pantoate + beta-alanine + ATP = (R)-pantothenate + AMP + diphosphate + H(+). It functions in the pathway cofactor biosynthesis; (R)-pantothenate biosynthesis; (R)-pantothenate from (R)-pantoate and beta-alanine: step 1/1. Catalyzes the condensation of pantoate with beta-alanine in an ATP-dependent reaction via a pantoyl-adenylate intermediate. The polypeptide is Pantothenate synthetase (Bacillus thuringiensis subsp. konkukian (strain 97-27)).